Here is a 459-residue protein sequence, read N- to C-terminus: Argininosuccinate lyase (459 aa).

This sequence belongs to the lyase 1 family. Argininosuccinate lyase subfamily.

The protein resides in the cytoplasm. The enzyme catalyses 2-(N(omega)-L-arginino)succinate = fumarate + L-arginine. It functions in the pathway amino-acid biosynthesis; L-arginine biosynthesis; L-arginine from L-ornithine and carbamoyl phosphate: step 3/3. The protein is Argininosuccinate lyase of Geobacillus kaustophilus (strain HTA426).